A 152-amino-acid polypeptide reads, in one-letter code: MVWRRLPRVARNADGAVRGPLSWTFAGLVRLYRAGWSARNAGLCRFEPSCSAYALAAVRRHGGVRGGVLAVARLLRCQPLAAGGYDPVPGTDPGPGIVRRPRGATADPGGPPDGRSAGDPAVAVPPVHRHGPPSPSQGMRAEIVGSGRGPWV.

A disordered region spans residues 81-152 (AAGGYDPVPG…IVGSGRGPWV (72 aa)).

The protein belongs to the UPF0161 family.

Its subcellular location is the cell membrane. Could be involved in insertion of integral membrane proteins into the membrane. The chain is Putative membrane protein insertion efficiency factor from Frankia casuarinae (strain DSM 45818 / CECT 9043 / HFP020203 / CcI3).